Consider the following 288-residue polypeptide: Small ribosomal subunit protein uS2 (288 aa).

The disordered stretch occupies residues 267-288; the sequence is EEVEEVEEEFIPSEIEDEDEKF.

It belongs to the universal ribosomal protein uS2 family.

The protein is Small ribosomal subunit protein uS2 of Petrotoga mobilis (strain DSM 10674 / SJ95).